We begin with the raw amino-acid sequence, 315 residues long: MNLNIRGIINYSLLPISGIFYLVSVFRKWLYRVNFFKVQKFKYPVIVVGNITVGGTGKTPIVIALAQYFKQQGKQVGIVSRGYGGAHHQGSLLVNKDTNVYLSGDEPLLIALQTDLPVMINKNRAKAVKDLINQCQVDLIISDDGLQHYKMDRDVEIVVIDGIKRFGNGFFLPLGPLRESITRLKSVDFVINNAGLCAGEFSVKLTLKMFVNVKTGEEKSLNYFKGKYCHGVAGIGHPERFFNALIRLGINLEHHIFADHYIYQQSDLVFEDNHPILMTAKDCVKCTQFENDQMWYLQVEADLSDDFLKKLDAKL.

ATP is bound at residue 52 to 59 (TVGGTGKT).

This sequence belongs to the LpxK family.

It catalyses the reaction a lipid A disaccharide + ATP = a lipid IVA + ADP + H(+). Its pathway is glycolipid biosynthesis; lipid IV(A) biosynthesis; lipid IV(A) from (3R)-3-hydroxytetradecanoyl-[acyl-carrier-protein] and UDP-N-acetyl-alpha-D-glucosamine: step 6/6. Transfers the gamma-phosphate of ATP to the 4'-position of a tetraacyldisaccharide 1-phosphate intermediate (termed DS-1-P) to form tetraacyldisaccharide 1,4'-bis-phosphate (lipid IVA). The polypeptide is Tetraacyldisaccharide 4'-kinase (Ruthia magnifica subsp. Calyptogena magnifica).